Reading from the N-terminus, the 299-residue chain is 4-diphosphocytidyl-2-C-methyl-D-erythritol kinase (299 aa).

The active site involves K18. Residue 104–114 (PIASGIGGGSS) participates in ATP binding. Residue D146 is part of the active site.

Belongs to the GHMP kinase family. IspE subfamily.

The enzyme catalyses 4-CDP-2-C-methyl-D-erythritol + ATP = 4-CDP-2-C-methyl-D-erythritol 2-phosphate + ADP + H(+). It functions in the pathway isoprenoid biosynthesis; isopentenyl diphosphate biosynthesis via DXP pathway; isopentenyl diphosphate from 1-deoxy-D-xylulose 5-phosphate: step 3/6. In terms of biological role, catalyzes the phosphorylation of the position 2 hydroxy group of 4-diphosphocytidyl-2C-methyl-D-erythritol. The protein is 4-diphosphocytidyl-2-C-methyl-D-erythritol kinase of Brucella melitensis biotype 1 (strain ATCC 23456 / CCUG 17765 / NCTC 10094 / 16M).